The sequence spans 161 residues: Globin CTT-VIIB-5/CTT-VIIB-9 (161 aa).

The first 16 residues, 1–16, serve as a signal peptide directing secretion; it reads MKFFAVLALCIVGAIA. The 144-residue stretch at 18–161 folds into the Globin domain; the sequence is PLTADEASLV…NTFAIVVPRL (144 aa). Histidine 76 and histidine 111 together coordinate heme b.

The protein belongs to the globin family. In terms of assembly, homodimer.

The chain is Globin CTT-VIIB-5/CTT-VIIB-9 (CTT-7B5) from Chironomus thummi thummi (Midge).